The sequence spans 1021 residues: Sodium/potassium-transporting ATPase subunit alpha-1 (1021 aa).

The propeptide occupies 1 to 5; sequence MGKGA. Positions 1-11 are enriched in basic and acidic residues; that stretch reads MGKGAGRDKYE. Residues 1 to 31 are disordered; it reads MGKGAGRDKYEPTATSEHGTKKKKAKERDMD. At 6–85 the chain is on the cytoplasmic side; that stretch reads GRDKYEPTAT…NTLTPPPTTP (80 aa). The residue at position 10 (tyrosine 10) is a Phosphotyrosine. Serine 16 is subject to Phosphoserine; by PKC. The interval 80–82 is phosphoinositide-3 kinase binding; the sequence is PPP. A helical transmembrane segment spans residues 86 to 106; sequence EWVKFCRQLFGGFSLLLWIGS. The Extracellular segment spans residues 107–129; that stretch reads LLCFLAYGITSVMEGEPNSDNLY. Residues 130–150 form a helical membrane-spanning segment; sequence LGVVLAAVVIITGCFSYYQEA. Residues 151-286 are Cytoplasmic-facing; it reads KSSKIMESFK…GGKTPIAMEI (136 aa). Residues 214-233 are disordered; that stretch reads SSLTGESEPQTRSPDFSNEN. A helical membrane pass occupies residues 287–306; sequence EHFIHLITGVAVFLGVSFFI. Residues 307–318 are Extracellular-facing; sequence LSLILEYTWLEA. Residues 319–336 form a helical membrane-spanning segment; it reads VIFLIGIIVANVPEGLLA. At 337–770 the chain is on the cytoplasmic side; the sequence is TVTVCLTLTA…EEGRLIFDNL (434 aa). Catalysis depends on aspartate 374, which acts as the 4-aspartylphosphate intermediate. Lysine 485 provides a ligand contact to ATP. 2 residues coordinate Mg(2+): aspartate 715 and aspartate 719. The chain crosses the membrane as a helical span at residues 771-790; that stretch reads KKSIAYTLTSNIPEITPFLI. The Extracellular segment spans residues 791-800; that stretch reads FIIANIPLPL. Residues 801-821 form a helical membrane-spanning segment; sequence GTCTILCIDLGTDMVPAISLA. Topologically, residues 822 to 841 are cytoplasmic; that stretch reads YEQAESDIMKRQPRNPKTDK. Residues 842 to 864 form a helical membrane-spanning segment; the sequence is LVNERLISMAYGQIGMIQALGGF. Residues 865 to 916 lie on the Extracellular side of the membrane; sequence FTYFVIMAENGFLPSGLVGIRLQWDDRWINDVEDSYGQQWTFEQRKIVEFTC. A helical membrane pass occupies residues 917-936; sequence HTAFFVSIVVVQWADLIICK. Residues 937–949 lie on the Cytoplasmic side of the membrane; sequence TRRNSVFQQGMKN. Serine 941 bears the Phosphoserine; by PKA mark. Residues 950–968 form a helical membrane-spanning segment; it reads KILIFGLFEETALAAFLSY. The Extracellular portion of the chain corresponds to 969–983; it reads CPGMDVALRMYPLKP. The chain crosses the membrane as a helical span at residues 984-1004; that stretch reads TWWFCAFPYSLLIFLYDEIRK. Topologically, residues 1005 to 1021 are cytoplasmic; the sequence is LIIRRNPGGWVERETYY.

It belongs to the cation transport ATPase (P-type) (TC 3.A.3) family. Type IIC subfamily. In terms of assembly, the sodium/potassium-transporting ATPase is composed of a catalytic alpha subunit, an auxiliary non-catalytic beta subunit and an additional regulatory subunit. In terms of processing, phosphorylation on Tyr-10 modulates pumping activity.

The protein localises to the cell membrane. It localises to the sarcolemma. The catalysed reaction is K(+)(out) + Na(+)(in) + ATP + H2O = K(+)(in) + Na(+)(out) + ADP + phosphate + H(+). Its function is as follows. This is the catalytic component of the active enzyme, which catalyzes the hydrolysis of ATP coupled with the exchange of sodium and potassium ions across the plasma membrane. This action creates the electrochemical gradient of sodium and potassium ions, providing the energy for active transport of various nutrients. The polypeptide is Sodium/potassium-transporting ATPase subunit alpha-1 (ATP1A1) (Gallus gallus (Chicken)).